The chain runs to 126 residues: Large ribosomal subunit protein eL8 (126 aa).

The protein belongs to the eukaryotic ribosomal protein eL8 family. Part of the 50S ribosomal subunit. Probably part of the RNase P complex.

It localises to the cytoplasm. In terms of biological role, multifunctional RNA-binding protein that recognizes the K-turn motif in ribosomal RNA, the RNA component of RNase P, box H/ACA, box C/D and box C'/D' sRNAs. This chain is Large ribosomal subunit protein eL8, found in Sulfolobus acidocaldarius (strain ATCC 33909 / DSM 639 / JCM 8929 / NBRC 15157 / NCIMB 11770).